Here is an 84-residue protein sequence, read N- to C-terminus: Conophysin-R (84 aa).

Disulfide bonds link Cys6–Cys46, Cys9–Cys20, Cys14–Cys36, Cys21–Cys26, Cys53–Cys71, Cys65–Cys83, and Cys72–Cys77.

Expressed by the venom duct.

The protein localises to the secreted. Functionally, targets vasopressin-oxytocin related receptors. No effect observed when injected into goldfish or into mice. The protein is Conophysin-R of Conus radiatus (Rayed cone).